Reading from the N-terminus, the 162-residue chain is Lipoprotein signal peptidase (162 aa).

Helical transmembrane passes span 12–32 (WLWLVVVVLIIDLGSKYLILQ), 70–90 (WFFAGIAIGICVILMVMMYRS), and 102–122 (ALIIGGALGNLFDRLWHGFVV). Catalysis depends on residues aspartate 123 and aspartate 141. Residues 137–157 (FNLADSAICIGAALIVLEGFL) traverse the membrane as a helical segment.

Belongs to the peptidase A8 family.

The protein resides in the cell inner membrane. It catalyses the reaction Release of signal peptides from bacterial membrane prolipoproteins. Hydrolyzes -Xaa-Yaa-Zaa-|-(S,diacylglyceryl)Cys-, in which Xaa is hydrophobic (preferably Leu), and Yaa (Ala or Ser) and Zaa (Gly or Ala) have small, neutral side chains.. It functions in the pathway protein modification; lipoprotein biosynthesis (signal peptide cleavage). This protein specifically catalyzes the removal of signal peptides from prolipoproteins. The polypeptide is Lipoprotein signal peptidase (Citrobacter koseri (strain ATCC BAA-895 / CDC 4225-83 / SGSC4696)).